The chain runs to 309 residues: Xylose/arabinose import permease protein XacI (309 aa).

6 helical membrane-spanning segments follow: residues 29-49 (LVVFFLGFFLVPLETGIMTAI), 89-109 (LIMSIPATIGSVLFGSMAAYG), 121-141 (MLMLFVVGVFVPYQAVLVPLA), 170-190 (ELVPLVITHIAYGIPICTILF), 227-247 (MFGVVFIYQFTQIYNEFLFAF), and 282-302 (AAFLAAVPTLILYVAFAEQFA). The ABC transmembrane type-1 domain maps to 85–297 (FFNSLIMSIP…VPTLILYVAF (213 aa)).

It belongs to the binding-protein-dependent transport system permease family. As to quaternary structure, the complex is composed of two ATP-binding proteins (XacJ and XacK), two transmembrane proteins (XacH and XacI) and a solute-binding protein (XacG).

It localises to the cell membrane. Functionally, part of the ABC transporter complex XacGHIJK involved in the uptake of xylose and arabinose. Responsible for the translocation of the substrate across the membrane. The chain is Xylose/arabinose import permease protein XacI from Haloferax volcanii (strain ATCC 29605 / DSM 3757 / JCM 8879 / NBRC 14742 / NCIMB 2012 / VKM B-1768 / DS2) (Halobacterium volcanii).